We begin with the raw amino-acid sequence, 687 residues long: Glycine--tRNA ligase beta subunit (687 aa).

This sequence belongs to the class-II aminoacyl-tRNA synthetase family. Tetramer of two alpha and two beta subunits.

The protein resides in the cytoplasm. The catalysed reaction is tRNA(Gly) + glycine + ATP = glycyl-tRNA(Gly) + AMP + diphosphate. The chain is Glycine--tRNA ligase beta subunit from Neisseria meningitidis serogroup A / serotype 4A (strain DSM 15465 / Z2491).